We begin with the raw amino-acid sequence, 571 residues long: Proline--tRNA ligase (571 aa).

This sequence belongs to the class-II aminoacyl-tRNA synthetase family. ProS type 1 subfamily. As to quaternary structure, homodimer.

Its subcellular location is the cytoplasm. It catalyses the reaction tRNA(Pro) + L-proline + ATP = L-prolyl-tRNA(Pro) + AMP + diphosphate. Catalyzes the attachment of proline to tRNA(Pro) in a two-step reaction: proline is first activated by ATP to form Pro-AMP and then transferred to the acceptor end of tRNA(Pro). As ProRS can inadvertently accommodate and process non-cognate amino acids such as alanine and cysteine, to avoid such errors it has two additional distinct editing activities against alanine. One activity is designated as 'pretransfer' editing and involves the tRNA(Pro)-independent hydrolysis of activated Ala-AMP. The other activity is designated 'posttransfer' editing and involves deacylation of mischarged Ala-tRNA(Pro). The misacylated Cys-tRNA(Pro) is not edited by ProRS. The chain is Proline--tRNA ligase from Pseudomonas putida (strain ATCC 700007 / DSM 6899 / JCM 31910 / BCRC 17059 / LMG 24140 / F1).